Reading from the N-terminus, the 264-residue chain is MICOS complex subunit MIC27 (264 aa).

The transit peptide at 1-27 directs the protein to the mitochondrion; it reads MAALRMGKLTTMPTGLIYASISVHVAK. Topologically, residues 28-110 are mitochondrial intermembrane; it reads EEESKKQLVK…YVYLKNPPRD (83 aa). The helical transmembrane segment at 111–129 threads the bilayer; sequence FLPKIGVITVSGLAGFISA. Residues 130-137 are Mitochondrial matrix-facing; that stretch reads RKGSRFKR. The helical transmembrane segment at 138–155 threads the bilayer; sequence IAYPLGLATLGATVCYPV. The Mitochondrial intermembrane portion of the chain corresponds to 156-264; sequence QSVIIAKVAG…EDIDMYSTRS (109 aa). Basic and acidic residues predominate over residues 189-198; it reads KLPEHKEKTK. The interval 189-264 is disordered; the sequence is KLPEHKEKTK…EDIDMYSTRS (76 aa). Positions 223 to 238 are enriched in low complexity; it reads AELSSETKTKSTSGAT. Over residues 245–256 the composition is skewed to basic and acidic residues; it reads KLMDHGQSHPED.

Belongs to the apolipoprotein O/MICOS complex subunit Mic27 family. As to quaternary structure, component of the mitochondrial contact site and cristae organizing system (MICOS) complex, composed of at least MICOS10/MIC10, CHCHD3/MIC19, CHCHD6/MIC25, APOOL/MIC27, IMMT/MIC60, APOO/MIC23/MIC26 and QIL1/MIC13. This complex was also known under the names MINOS or MitOS complex. The MICOS complex associates with mitochondrial outer membrane proteins SAMM50, MTX1 and MTX2 (together described as components of the mitochondrial outer membrane sorting assembly machinery (SAM) complex) and DNAJC11, mitochondrial inner membrane protein TMEM11 and with HSPA9. The MICOS and SAM complexes together with DNAJC11 are part of a large protein complex spanning both membranes termed the mitochondrial intermembrane space bridging (MIB) complex. Interacts with MICOS10/MIC10, IMMT/MIC60 and APOO/MIC23/MIC26.

Its subcellular location is the mitochondrion inner membrane. It is found in the mitochondrion. Functionally, component of the MICOS complex, a large protein complex of the mitochondrial inner membrane that plays crucial roles in the maintenance of crista junctions, inner membrane architecture, and formation of contact sites to the outer membrane. Specifically binds to cardiolipin (in vitro) but not to the precursor lipid phosphatidylglycerol. Plays a crucial role in crista junction formation and mitochondrial function. The protein is MICOS complex subunit MIC27 (APOL) of Bos taurus (Bovine).